The primary structure comprises 128 residues: Cytochrome b (128 aa).

3 helical membrane-spanning segments follow: residues 25 to 45 (FGSMLLSCLTIQIITGFFLAI), 69 to 90 (WIMQNTHAIGXSLFFICIYIHI), and 105 to 125 (WLSGTTLLITLMATASXXMCY). Residues His75 and His89 each coordinate heme b. Residue His126 coordinates a ubiquinone.

Belongs to the cytochrome b family. The cytochrome bc1 complex contains 3 respiratory subunits (MT-CYB, CYC1 and UQCRFS1), 2 core proteins (UQCRC1 and UQCRC2) and probably 6 low-molecular weight proteins. Heme b is required as a cofactor.

The protein localises to the mitochondrion inner membrane. In terms of biological role, component of the ubiquinol-cytochrome c reductase complex (complex III or cytochrome b-c1 complex) that is part of the mitochondrial respiratory chain. The b-c1 complex mediates electron transfer from ubiquinol to cytochrome c. Contributes to the generation of a proton gradient across the mitochondrial membrane that is then used for ATP synthesis. The sequence is that of Cytochrome b (MT-CYB) from Crotalus viridis viridis (Prairie rattlesnake).